A 108-amino-acid chain; its full sequence is MSYYPVKDRIEKIIDRHNSKFSEAEIHIIDALIKWLRGNHVDITLLYMFEQLIGFDPNRIPDEDKLAIMKLILTAHPDYLLKYDKPEDIARVFKSIPGFEDILKTIFT.

This is an uncharacterized protein from Saccharolobus islandicus (Sulfolobus islandicus).